Reading from the N-terminus, the 1074-residue chain is Telomerase reverse transcriptase (1074 aa).

Residues 240 to 265 (DKVSCETMQDGESGKTTLVQKQPGSK) form a disordered region. Over residues 253 to 262 (GKTTLVQKQP) the composition is skewed to polar residues. The TFLY; involved in RNA binding signature appears at 300–305 (TLGFLY). 2 interaction with RNA template regions span residues 355 to 360 (LPRRFF) and 461 to 486 (WKIKVNNCDWLKISKTGRVPPSELSY). The 326-residue stretch at 552-877 (TPDQVAALPK…CLFPWCGLLL (326 aa)) folds into the Reverse transcriptase domain. Positions 649, 810, and 811 each coordinate Mg(2+).

This sequence belongs to the reverse transcriptase family. Telomerase subfamily. As to quaternary structure, catalytic subunit of the telomerase holoenzyme complex composed minimally of TERT and the telomerase RNA template component (TERC). In terms of tissue distribution, detected at highest levels in gill, ovary and testis, and at lower levels in brain, eye, heart, skin, spleen and stomach.

Its subcellular location is the nucleus. The protein resides in the chromosome. It is found in the telomere. It catalyses the reaction DNA(n) + a 2'-deoxyribonucleoside 5'-triphosphate = DNA(n+1) + diphosphate. Telomerase is a ribonucleoprotein enzyme essential for the replication of chromosome termini in most eukaryotes. It elongates telomeres. It is a reverse transcriptase that adds simple sequence repeats to chromosome ends by copying a template sequence within the RNA component of the enzyme. This is Telomerase reverse transcriptase from Takifugu rubripes (Japanese pufferfish).